The following is a 564-amino-acid chain: 2-succinyl-5-enolpyruvyl-6-hydroxy-3-cyclohexene-1-carboxylate synthase (564 aa).

Belongs to the TPP enzyme family. MenD subfamily. As to quaternary structure, homodimer. The cofactor is Mg(2+). Mn(2+) is required as a cofactor. Requires thiamine diphosphate as cofactor.

The catalysed reaction is isochorismate + 2-oxoglutarate + H(+) = 5-enolpyruvoyl-6-hydroxy-2-succinyl-cyclohex-3-ene-1-carboxylate + CO2. The protein operates within quinol/quinone metabolism; 1,4-dihydroxy-2-naphthoate biosynthesis; 1,4-dihydroxy-2-naphthoate from chorismate: step 2/7. Its pathway is quinol/quinone metabolism; menaquinone biosynthesis. Functionally, catalyzes the thiamine diphosphate-dependent decarboxylation of 2-oxoglutarate and the subsequent addition of the resulting succinic semialdehyde-thiamine pyrophosphate anion to isochorismate to yield 2-succinyl-5-enolpyruvyl-6-hydroxy-3-cyclohexene-1-carboxylate (SEPHCHC). This Vibrio vulnificus (strain YJ016) protein is 2-succinyl-5-enolpyruvyl-6-hydroxy-3-cyclohexene-1-carboxylate synthase.